Reading from the N-terminus, the 56-residue chain is uncharacterized protein (56 aa).

The helical transmembrane segment at 33 to 53 (INIIYLAIMKIIMNIIMMIMI) threads the bilayer.

The protein localises to the host membrane. This is an uncharacterized protein from Bos taurus (Bovine).